The chain runs to 321 residues: Ribonucleoside-diphosphate reductase small subunit (321 aa).

Fe cation contacts are provided by Asp78, Glu108, and His111. The active site involves Tyr115. A helical membrane pass occupies residues 165-185 (ILMILIEGLFFASSFASIAYL). Glu171, Glu205, and His208 together coordinate Fe cation.

Belongs to the ribonucleoside diphosphate reductase small chain family. As to quaternary structure, heterotetramer composed of a homodimer of the large subunit (R1) and a homodimer of the small subunit (R2). Larger multisubunit protein complex are also active, composed of (R1)n(R2)n. Requires Fe cation as cofactor.

It localises to the host membrane. It catalyses the reaction a 2'-deoxyribonucleoside 5'-diphosphate + [thioredoxin]-disulfide + H2O = a ribonucleoside 5'-diphosphate + [thioredoxin]-dithiol. Functionally, ribonucleoside-diphosphate reductase holoenzyme provides the precursors necessary for viral DNA synthesis. Allows virus growth in non-dividing cells, as well as reactivation from latency in infected hosts. Catalyzes the biosynthesis of deoxyribonucleotides from the corresponding ribonucleotides. This is Ribonucleoside-diphosphate reductase small subunit from Equus caballus (Horse).